Consider the following 433-residue polypeptide: MSAKKLFIQTLGCAMNVRDSEHMIAELTQKENYALTEDIKEADLILINTCSVREKPVHKLFSEVGGFEKVKKEGAKIGVCGCTASHLGNEIFKRAPYVDFVLGARNISKITQAIKTPKFMGVDIDYDESEFAFADFRNSIYKSYINISIGCDKHCTYCIVPHTRGDEISIPFNIIYKEAQKAIEKGAKEIFLLGQNVNNYGKRFRNEHKKMDFSDLLEELSTIEGLERIRFTSPHPLHMDDKFLEVFANNPKVCKSMHMPLQSGSSEILKAMKRGYTKEWYLNRALKLRELCPNVSISTDIIVAFPGESEKDFEETVDVLEKVRFEQIFSFKYSKRPLTKAATMPNQIDEEIASRRLSTLQNRHSEILDKIVKKQENKTFKVLFEELRAGNSIAGRTDNNFLVQVEGSEELLGQFKEVKITNAKRMVLYGEIV.

The MTTase N-terminal domain occupies 4-119 (KKLFIQTLGC…ITQAIKTPKF (116 aa)). [4Fe-4S] cluster contacts are provided by cysteine 13, cysteine 50, cysteine 82, cysteine 151, cysteine 155, and cysteine 158. Positions 137-370 (RNSIYKSYIN…QNRHSEILDK (234 aa)) constitute a Radical SAM core domain. In terms of domain architecture, TRAM spans 373-433 (KKQENKTFKV…KRMVLYGEIV (61 aa)).

This sequence belongs to the methylthiotransferase family. MiaB subfamily. Monomer. [4Fe-4S] cluster serves as cofactor.

It is found in the cytoplasm. It catalyses the reaction N(6)-dimethylallyladenosine(37) in tRNA + (sulfur carrier)-SH + AH2 + 2 S-adenosyl-L-methionine = 2-methylsulfanyl-N(6)-dimethylallyladenosine(37) in tRNA + (sulfur carrier)-H + 5'-deoxyadenosine + L-methionine + A + S-adenosyl-L-homocysteine + 2 H(+). In terms of biological role, catalyzes the methylthiolation of N6-(dimethylallyl)adenosine (i(6)A), leading to the formation of 2-methylthio-N6-(dimethylallyl)adenosine (ms(2)i(6)A) at position 37 in tRNAs that read codons beginning with uridine. This is tRNA-2-methylthio-N(6)-dimethylallyladenosine synthase from Campylobacter jejuni subsp. jejuni serotype O:2 (strain ATCC 700819 / NCTC 11168).